Here is a 382-residue protein sequence, read N- to C-terminus: Flap endonuclease 1 (382 aa).

The N-domain stretch occupies residues Met1 to Arg104. A Mg(2+)-binding site is contributed by Asp34. 2 residues coordinate DNA: Arg47 and Arg70. Positions 86, 158, 160, 179, and 181 each coordinate Mg(2+). Positions Glu122–His253 are I-domain. Glu158 lines the DNA pocket. DNA is bound by residues Gly231 and Asp233. Asp233 is a Mg(2+) binding site. Residues Thr336–Phe344 are interaction with PCNA. A disordered region spans residues Lys358–Lys382. Residues Arg359 to Lys368 show a composition bias toward basic and acidic residues. The span at Lys369–Lys382 shows a compositional bias: basic residues.

Belongs to the XPG/RAD2 endonuclease family. FEN1 subfamily. Interacts with PCNA. Three molecules of crn-1 bind to one PCNA trimer with each molecule binding to one PCNA monomer. PCNA stimulates the nuclease activity without altering cleavage specificity. Interacts with cps-6. The cofactor is Mg(2+). In terms of processing, phosphorylated. Phosphorylation upon DNA damage induces relocalization to the nuclear plasma.

It is found in the nucleus. It localises to the nucleolus. The protein localises to the nucleoplasm. The protein resides in the mitochondrion. Its function is as follows. Structure-specific nuclease with 5'-flap endonuclease and 5'-3' exonuclease activities involved in DNA replication and repair. During DNA replication, cleaves the 5'-overhanging flap structure that is generated by displacement synthesis when DNA polymerase encounters the 5'-end of a downstream Okazaki fragment. It enters the flap from the 5'-end and then tracks to cleave the flap base, leaving a nick for ligation. Also involved in the long patch base excision repair (LP-BER) pathway, by cleaving within the apurinic/apyrimidinic (AP) site-terminated flap. Acts as a genome stabilization factor that prevents flaps from equilibrating into structures that lead to duplications and deletions. Also possesses 5'-3' exonuclease activity on nicked or gapped double-stranded DNA, and exhibits RNase H activity. Also involved in replication and repair of rDNA and in repairing mitochondrial DNA. Can associate and cooperate with cps-6 to promote stepwise DNA fragmentation, utilizing the endonuclease activity of cps-6 and both of its own 5'-3' exonuclease activity and gap-dependent endonuclease activity. May play a critical role in switching the state of cells from DNA replication/repair to DNA degradation during apoptosis. The chain is Flap endonuclease 1 from Caenorhabditis elegans.